A 544-amino-acid chain; its full sequence is Chaperonin GroEL (544 aa).

ATP-binding positions include 30 to 33 (TLGP), Lys51, 87 to 91 (DGTTT), Gly415, 481 to 483 (DAL), and Asp497.

Belongs to the chaperonin (HSP60) family. Forms a cylinder of 14 subunits composed of two heptameric rings stacked back-to-back. Interacts with the co-chaperonin GroES.

It localises to the cytoplasm. It catalyses the reaction ATP + H2O + a folded polypeptide = ADP + phosphate + an unfolded polypeptide.. Together with its co-chaperonin GroES, plays an essential role in assisting protein folding. The GroEL-GroES system forms a nano-cage that allows encapsulation of the non-native substrate proteins and provides a physical environment optimized to promote and accelerate protein folding. The sequence is that of Chaperonin GroEL from Chlamydia felis (strain Fe/C-56) (Chlamydophila felis).